The following is a 240-amino-acid chain: Prolactin-8A6 (240 aa).

Positions 1 to 30 (MALLLSQPHFSGPLLLLVVSNLLLWEKAAS) are cleaved as a signal peptide. Intrachain disulfides connect Cys-34–Cys-41, Cys-101–Cys-216, and Cys-233–Cys-240. Asn-212 is a glycosylation site (N-linked (GlcNAc...) asparagine).

It belongs to the somatotropin/prolactin family. In terms of tissue distribution, expressed specifically in the spongiotrophoblast and trophoblast giant cells from the junctional zone of the chorioallantoic placenta.

It localises to the secreted. The polypeptide is Prolactin-8A6 (Prl8a6) (Mus musculus (Mouse)).